Consider the following 376-residue polypeptide: MGGGGSALRVCADHRGGINWLSLSPDGQRLLTGSEDGTARLWSTADGQCCALLQGHESYVTFCQLEDEAAFTCSADCTIRRWDVLTGQCLQVYRGHTSIVNRILVANNQLFSSSYDRTARVWSVDKGQMSREFRGHRNCVLTLAYSAPWDLPSTPCAEEAAAGGLLVTGSTDGTAKVWQVASGCCHQTLRGHTGAVLCLVLDTPGHTAFTGSTDATIRAWDILSGEQLRVFREHRGSVICLELVNRLVYSGSADRTVKCWLADTGECVRTFTAHRRNVSALKYHAGTLFTGSGDACARAFDAQSGELRRVFRGHTFIINCIQVHGQVLYTASHDGALRLWDVRGLRGAPRPPPPMRSLSRLFSNKVGCAAAPLQPA.

8 WD repeats span residues 13–52 (DHRG…CCAL), 55–94 (GHES…QVYR), 95–132 (GHTS…MSRE), 135–188 (GHRN…CHQT), 191–232 (GHTG…RVFR), 234–272 (HRGS…RTFT), 274–310 (HRRN…LRRV), and 313–350 (GHTF…GAPR).

This Homo sapiens (Human) protein is WD repeat-containing protein 86 (WDR86).